The following is a 180-amino-acid chain: Large ribosomal subunit protein uL6 (180 aa).

Belongs to the universal ribosomal protein uL6 family. Part of the 50S ribosomal subunit.

In terms of biological role, this protein binds to the 23S rRNA, and is important in its secondary structure. It is located near the subunit interface in the base of the L7/L12 stalk, and near the tRNA binding site of the peptidyltransferase center. The chain is Large ribosomal subunit protein uL6 from Borrelia recurrentis (strain A1).